Here is a 454-residue protein sequence, read N- to C-terminus: UDP-N-acetylmuramoylalanine--D-glutamate ligase (454 aa).

116–122 (GTNGKTS) provides a ligand contact to ATP.

It belongs to the MurCDEF family.

Its subcellular location is the cytoplasm. The enzyme catalyses UDP-N-acetyl-alpha-D-muramoyl-L-alanine + D-glutamate + ATP = UDP-N-acetyl-alpha-D-muramoyl-L-alanyl-D-glutamate + ADP + phosphate + H(+). Its pathway is cell wall biogenesis; peptidoglycan biosynthesis. Its function is as follows. Cell wall formation. Catalyzes the addition of glutamate to the nucleotide precursor UDP-N-acetylmuramoyl-L-alanine (UMA). This Lachnoclostridium phytofermentans (strain ATCC 700394 / DSM 18823 / ISDg) (Clostridium phytofermentans) protein is UDP-N-acetylmuramoylalanine--D-glutamate ligase.